A 346-amino-acid chain; its full sequence is Sulfate/thiosulfate import ATP-binding protein CysA 1 (346 aa).

The 235-residue stretch at Val-3–Ile-237 folds into the ABC transporter domain. Residue Gly-35 to Thr-42 coordinates ATP.

This sequence belongs to the ABC transporter superfamily. Sulfate/tungstate importer (TC 3.A.1.6) family. The complex is composed of two ATP-binding proteins (CysA), two transmembrane proteins (CysT and CysW) and a solute-binding protein (CysP).

It is found in the cell inner membrane. The enzyme catalyses sulfate(out) + ATP + H2O = sulfate(in) + ADP + phosphate + H(+). It catalyses the reaction thiosulfate(out) + ATP + H2O = thiosulfate(in) + ADP + phosphate + H(+). Functionally, part of the ABC transporter complex CysAWTP involved in sulfate/thiosulfate import. Responsible for energy coupling to the transport system. The polypeptide is Sulfate/thiosulfate import ATP-binding protein CysA 1 (Agrobacterium fabrum (strain C58 / ATCC 33970) (Agrobacterium tumefaciens (strain C58))).